The sequence spans 370 residues: Phosphoserine aminotransferase (370 aa).

Methionine 1 carries the post-translational modification N-acetylmethionine. 2 residues coordinate O-phospho-L-serine: histidine 44 and arginine 45. N6-acetyllysine is present on lysine 51. Residues glycine 79 and tryptophan 107 each contribute to the pyridoxal 5'-phosphate site. Lysine 127 is subject to N6-acetyllysine. Pyridoxal 5'-phosphate contacts are provided by threonine 156, aspartate 176, and glutamine 199. Lysine 200 is subject to N6-(pyridoxal phosphate)lysine. The pyridoxal 5'-phosphate site is built by asparagine 241 and threonine 242. Lysine 269, lysine 318, and lysine 323 each carry N6-acetyllysine. Serine 331 is subject to Phosphoserine. Residue lysine 333 is modified to N6-acetyllysine. Residues histidine 335, arginine 336, and arginine 342 each contribute to the O-phospho-L-serine site.

It belongs to the class-V pyridoxal-phosphate-dependent aminotransferase family. SerC subfamily. As to quaternary structure, homodimer. Pyridoxal 5'-phosphate is required as a cofactor.

It catalyses the reaction O-phospho-L-serine + 2-oxoglutarate = 3-phosphooxypyruvate + L-glutamate. The protein operates within amino-acid biosynthesis; L-serine biosynthesis; L-serine from 3-phospho-D-glycerate: step 2/3. In terms of biological role, involved in L-serine biosynthesis via the phosphorylated pathway, a three-step pathway converting the glycolytic intermediate 3-phospho-D-glycerate into L-serine. Catalyzes the second step, that is the pyridoxal 5'-phosphate-dependent transamination of 3-phosphohydroxypyruvate and L-glutamate to O-phosphoserine (OPS) and alpha-ketoglutarate. The protein is Phosphoserine aminotransferase of Mus musculus (Mouse).